A 211-amino-acid chain; its full sequence is Histidine biosynthesis bifunctional protein HisIE (211 aa).

The segment at 1–122 (MSVKAAEVSS…DPQEESQMVW (122 aa)) is phosphoribosyl-AMP cyclohydrolase. The phosphoribosyl-ATP pyrophosphohydrolase stretch occupies residues 123-211 (LHQLEQLLAA…VINKLKERHK (89 aa)).

This sequence in the N-terminal section; belongs to the PRA-CH family. The protein in the C-terminal section; belongs to the PRA-PH family.

It localises to the cytoplasm. It catalyses the reaction 1-(5-phospho-beta-D-ribosyl)-ATP + H2O = 1-(5-phospho-beta-D-ribosyl)-5'-AMP + diphosphate + H(+). The catalysed reaction is 1-(5-phospho-beta-D-ribosyl)-5'-AMP + H2O = 1-(5-phospho-beta-D-ribosyl)-5-[(5-phospho-beta-D-ribosylamino)methylideneamino]imidazole-4-carboxamide. The protein operates within amino-acid biosynthesis; L-histidine biosynthesis; L-histidine from 5-phospho-alpha-D-ribose 1-diphosphate: step 2/9. Its pathway is amino-acid biosynthesis; L-histidine biosynthesis; L-histidine from 5-phospho-alpha-D-ribose 1-diphosphate: step 3/9. The protein is Histidine biosynthesis bifunctional protein HisIE of Vibrio vulnificus (strain YJ016).